Here is a 257-residue protein sequence, read N- to C-terminus: MVRPTEAEVKKSLSRLPAARKRAGNRAHLATYRRLLKYSTLPDLWRFLSSRPQNPPLGHHRLFFEVTLGHRIADCVILVSGGHQPVCYVVELKTCLSHQLIPTNTVRTSQRAQGLCQLSDSIHYIAHSAPPGTEAWTITPLLIFKNQKTLKTVYSESPGAFPTPVHTTEGKLCAFLTARENADIRKVLSKVPKKPKMDRGGKILGPTPGKRAVYSQAHHGRNKKGRPWTAQPTRAKSRTKDKGTPAFPRAGPACSGP.

A disordered region spans residues 193–257; sequence KKPKMDRGGK…PRAGPACSGP (65 aa).

This sequence belongs to the herpesviridae UL24 family.

It is found in the virion. The protein resides in the host cytoplasm. The protein localises to the host nucleus. It localises to the host nucleolus. Its subcellular location is the host Golgi apparatus. Its function is as follows. May participate in nuclear egress of viral particles. Plays a role in the dispersal of several host nucleolar proteins including NCL/nucleolin and NPM1. Since deletion of host NCL/nucleolin negatively impact on nuclear egress, UL24 supposedly acts on this process through its effect on host nucleoli. Induces cell cycle arrest in host cells at the G2/M phase following by apoptosis. The mechanism involves the inhibition of host mitotic complex cyclin-B/CDK1. The chain is Protein UL24 homolog (ORF20) from Homo sapiens (Human).